The sequence spans 329 residues: Protein RecA (329 aa).

Position 63-70 (G63–T70) interacts with ATP.

It belongs to the RecA family.

It localises to the cytoplasm. Its function is as follows. Can catalyze the hydrolysis of ATP in the presence of single-stranded DNA, the ATP-dependent uptake of single-stranded DNA by duplex DNA, and the ATP-dependent hybridization of homologous single-stranded DNAs. It interacts with LexA causing its activation and leading to its autocatalytic cleavage. The protein is Protein RecA of Malacoplasma penetrans (strain HF-2) (Mycoplasma penetrans).